Consider the following 267-residue polypeptide: L-aspartate dehydrogenase (267 aa).

NAD(+) is bound by residues A124 and N190. The active site involves H220.

It belongs to the L-aspartate dehydrogenase family.

It carries out the reaction L-aspartate + NADP(+) + H2O = oxaloacetate + NH4(+) + NADPH + H(+). The enzyme catalyses L-aspartate + NAD(+) + H2O = oxaloacetate + NH4(+) + NADH + H(+). Its pathway is cofactor biosynthesis; NAD(+) biosynthesis; iminoaspartate from L-aspartate (dehydrogenase route): step 1/1. Its function is as follows. Specifically catalyzes the NAD or NADP-dependent dehydrogenation of L-aspartate to iminoaspartate. This Ralstonia pickettii (strain 12J) protein is L-aspartate dehydrogenase.